The following is a 165-amino-acid chain: Peptide methionine sulfoxide reductase MsrA (165 aa).

The active site involves cysteine 10.

This sequence belongs to the MsrA Met sulfoxide reductase family.

The enzyme catalyses L-methionyl-[protein] + [thioredoxin]-disulfide + H2O = L-methionyl-(S)-S-oxide-[protein] + [thioredoxin]-dithiol. The catalysed reaction is [thioredoxin]-disulfide + L-methionine + H2O = L-methionine (S)-S-oxide + [thioredoxin]-dithiol. Has an important function as a repair enzyme for proteins that have been inactivated by oxidation. Catalyzes the reversible oxidation-reduction of methionine sulfoxide in proteins to methionine. The polypeptide is Peptide methionine sulfoxide reductase MsrA (Campylobacter jejuni (strain RM1221)).